The primary structure comprises 1056 residues: PH and SEC7 domain-containing protein 4 (1056 aa).

Positions 25-42 (LEPHPGECPRETCSHEDP) are enriched in basic and acidic residues. 6 disordered regions span residues 25–71 (LEPH…SGVE), 87–149 (CQEQ…QNRS), 195–239 (LPGD…QWGA), 340–362 (GAPA…APSA), 388–533 (VQPW…GDVQ), and 546–581 (LRTP…LANG). 2 stretches are compositionally biased toward polar residues: residues 88 to 99 (QEQTRATDPPES) and 128 to 137 (NTASPGSPVN). 3 positions are modified to phosphoserine: Ser-131, Ser-134, and Ser-143. Acidic residues predominate over residues 207–220 (ENEDSGEDSSEPEG). A Phosphoserine modification is found at Ser-413. Residues 414 to 423 (QDRDEREGGH) show a composition bias toward basic and acidic residues. The span at 438–456 (RSPASSPEPSSPESESRGP) shows a compositional bias: low complexity. 3 positions are modified to phosphoserine: Ser-448, Ser-469, and Ser-491. Composition is skewed to polar residues over residues 466–476 (QEGSPQLQHHS) and 486–502 (DASQ…QPSS). Basic and acidic residues predominate over residues 504–522 (KKKEAGEAPKPGEEVKSEG). The region spanning 544-736 (ENLRTPMNSS…KALYWSIRSE (193 aa)) is the SEC7 domain. A compositionally biased stretch (polar residues) spans 548–567 (TPMNSSWLPGSPMPQAQSPE). Residues 776 to 892 (PTYKQGILAR…WIARINLAAA (117 aa)) enclose the PH domain. Residues 921 to 976 (SSLEEQHRSHENCLDAAADDLLDLQRNLPERRGRGRELEEHRLRKEYLEYEKTRYE) adopt a coiled-coil conformation. The disordered stretch occupies residues 1004-1056 (AGGTREPKLSLKKSHSSPSLHQDEAPTTAKVKRNISERRTYRKIIPKRNRNQL). 2 positions are modified to phosphoserine: Ser-1019 and Ser-1022. Over residues 1043–1056 (TYRKIIPKRNRNQL) the composition is skewed to basic residues.

Widely expressed. Highest levels of expression are found in placenta, pancreas, spleen, thymus and peripheral blood.

Its subcellular location is the cell membrane. The protein resides in the cell projection. The protein localises to the ruffle membrane. Its function is as follows. Guanine nucleotide exchange factor for ARF6 and ARL14/ARF7. Through ARL14 activation, controls the movement of MHC class II-containing vesicles along the actin cytoskeleton in dendritic cells. Involved in membrane recycling. Interacts with several phosphatidylinositol phosphate species, including phosphatidylinositol 3,4-bisphosphate, phosphatidylinositol 3,5-bisphosphate and phosphatidylinositol 4,5-bisphosphate. In Homo sapiens (Human), this protein is PH and SEC7 domain-containing protein 4 (PSD4).